The primary structure comprises 695 residues: Lysophospholipase 2 (695 aa).

The signal sequence occupies residues 1–19 (MQLSVLIASVLAAGAAVDA). N-linked (GlcNAc...) asparagine glycosylation is found at Asn26, Asn72, Asn83, Asn115, Asn152, Asn171, Asn207, Asn269, Asn335, Asn379, Asn480, Asn504, Asn513, Asn532, Asn556, Asn573, Asn620, Asn626, Asn644, and Asn648. Residues 28 to 577 (SCPDNANFIR…TNYCWNGTID (550 aa)) form the PLA2c domain. A disordered region spans residues 612-662 (NTGSGTKSNSSSKTNSTLVTSSRATSTGTLISNSSSNSTVSSTAARSSTSS).

It belongs to the lysophospholipase family.

The protein resides in the secreted. Its subcellular location is the cell wall. The catalysed reaction is a 1-acyl-sn-glycero-3-phosphocholine + H2O = sn-glycerol 3-phosphocholine + a fatty acid + H(+). Its function is as follows. Catalyzes the release of fatty acids from lysophospholipids. Phospholipase B may well contribute to pathogenicity by abetting the fungus in damaging and traversing host cell membranes, processes which likely increase the rapidity of disseminated infection. In Candida glabrata (strain ATCC 2001 / BCRC 20586 / JCM 3761 / NBRC 0622 / NRRL Y-65 / CBS 138) (Yeast), this protein is Lysophospholipase 2.